Reading from the N-terminus, the 140-residue chain is Small ribosomal subunit protein eS17x (140 aa).

It belongs to the eukaryotic ribosomal protein eS17 family.

This chain is Small ribosomal subunit protein eS17x (RPS17C), found in Arabidopsis thaliana (Mouse-ear cress).